A 164-amino-acid chain; its full sequence is Diphosphoinositol polyphosphate phosphohydrolase 3-alpha (164 aa).

Residues Arg-9, 17–19 (KKR), and 38–40 (SSR) each bind substrate. A Nudix hydrolase domain is found at 17–144 (KKRAACLCFR…VHAEYLEKLK (128 aa)). Gly-49 and Glu-65 together coordinate Mg(2+). The Nudix box signature appears at 50–71 (GGMEPEEEPGGAAVREVYEEAG). Glu-68 acts as the Proton acceptor in catalysis. Position 69 (Glu-69) interacts with Mg(2+). Residues 89 to 91 (PKH), Arg-115, and Lys-133 each bind substrate. Positions 144 to 164 (KLGGSPTNGNSMAPSSPDSDP) are disordered. Polar residues predominate over residues 148–164 (SPTNGNSMAPSSPDSDP).

This sequence belongs to the Nudix hydrolase family. DIPP subfamily. Mg(2+) is required as a cofactor. The cofactor is Mn(2+). As to expression, mainly expressed in testis and, at lower level in brain. According to PubMed:12121577, it is widely expressed.

The protein localises to the cytoplasm. It catalyses the reaction diphospho-myo-inositol polyphosphate + H2O = myo-inositol polyphosphate + phosphate.. The enzyme catalyses P(1),P(6)-bis(5'-adenosyl) hexaphosphate + H2O = adenosine 5'-pentaphosphate + AMP + 2 H(+). It carries out the reaction P(1),P(5)-bis(5'-adenosyl) pentaphosphate + H2O = adenosine 5'-tetraphosphate + AMP + 2 H(+). Its function is as follows. Cleaves a beta-phosphate from the diphosphate groups in PP-InsP5 (diphosphoinositol pentakisphosphate), suggesting that it may play a role in signal transduction. Also able to catalyze the hydrolysis of dinucleoside oligophosphates, with Ap6A and Ap5A being the preferred substrates. The major reaction products are ADP and p4a from Ap6A and ADP and ATP from Ap5A. Also able to hydrolyze 5-phosphoribose 1-diphosphate. This Homo sapiens (Human) protein is Diphosphoinositol polyphosphate phosphohydrolase 3-alpha (NUDT10).